Consider the following 548-residue polypeptide: Chaperonin GroEL 1 (548 aa).

Residues 30–33, K51, 87–91, G415, 479–481, and D495 each bind ATP; these read TLGP, DGTTT, and NAA.

It belongs to the chaperonin (HSP60) family. In terms of assembly, forms a cylinder of 14 subunits composed of two heptameric rings stacked back-to-back. Interacts with the co-chaperonin GroES.

The protein resides in the cytoplasm. The catalysed reaction is ATP + H2O + a folded polypeptide = ADP + phosphate + an unfolded polypeptide.. Its function is as follows. Together with its co-chaperonin GroES, plays an essential role in assisting protein folding. The GroEL-GroES system forms a nano-cage that allows encapsulation of the non-native substrate proteins and provides a physical environment optimized to promote and accelerate protein folding. The polypeptide is Chaperonin GroEL 1 (Vibrio harveyi (Beneckea harveyi)).